A 368-amino-acid polypeptide reads, in one-letter code: Chorismate synthase (368 aa).

An NADP(+)-binding site is contributed by Arg-46. FMN contacts are provided by residues 123–125 (RSS), 240–241 (NA), Gly-285, 300–304 (KPTPT), and Arg-326.

This sequence belongs to the chorismate synthase family. Homotetramer. FMNH2 serves as cofactor.

The enzyme catalyses 5-O-(1-carboxyvinyl)-3-phosphoshikimate = chorismate + phosphate. The protein operates within metabolic intermediate biosynthesis; chorismate biosynthesis; chorismate from D-erythrose 4-phosphate and phosphoenolpyruvate: step 7/7. Its function is as follows. Catalyzes the anti-1,4-elimination of the C-3 phosphate and the C-6 proR hydrogen from 5-enolpyruvylshikimate-3-phosphate (EPSP) to yield chorismate, which is the branch point compound that serves as the starting substrate for the three terminal pathways of aromatic amino acid biosynthesis. This reaction introduces a second double bond into the aromatic ring system. This Porphyromonas gingivalis (strain ATCC BAA-308 / W83) protein is Chorismate synthase.